Here is a 69-residue protein sequence, read N- to C-terminus: Large ribosomal subunit protein bL31 (69 aa).

Residues Cys-16, Cys-18, Cys-37, and Cys-40 each coordinate Zn(2+).

The protein belongs to the bacterial ribosomal protein bL31 family. Type A subfamily. As to quaternary structure, part of the 50S ribosomal subunit. Zn(2+) serves as cofactor.

In terms of biological role, binds the 23S rRNA. This Teredinibacter turnerae (strain ATCC 39867 / T7901) protein is Large ribosomal subunit protein bL31.